Here is a 383-residue protein sequence, read N- to C-terminus: Acetylornithine deacetylase (383 aa).

His80 provides a ligand contact to Zn(2+). Residue Asp82 is part of the active site. Zn(2+) is bound at residue Asp112. The active site involves Glu144. Zn(2+)-binding residues include Glu145, Glu169, and His355.

This sequence belongs to the peptidase M20A family. ArgE subfamily. Homodimer. Requires Zn(2+) as cofactor. The cofactor is Co(2+). It depends on glutathione as a cofactor.

It localises to the cytoplasm. The catalysed reaction is N(2)-acetyl-L-ornithine + H2O = L-ornithine + acetate. It functions in the pathway amino-acid biosynthesis; L-arginine biosynthesis; L-ornithine from N(2)-acetyl-L-ornithine (linear): step 1/1. In terms of biological role, catalyzes the hydrolysis of the amide bond of N(2)-acetylated L-amino acids. Cleaves the acetyl group from N-acetyl-L-ornithine to form L-ornithine, an intermediate in L-arginine biosynthesis pathway, and a branchpoint in the synthesis of polyamines. This Salmonella choleraesuis (strain SC-B67) protein is Acetylornithine deacetylase.